Here is a 463-residue protein sequence, read N- to C-terminus: UDP-N-acetylmuramate--L-alanine ligase (463 aa).

112 to 118 (GTHGKTT) serves as a coordination point for ATP.

The protein belongs to the MurCDEF family.

The protein resides in the cytoplasm. The enzyme catalyses UDP-N-acetyl-alpha-D-muramate + L-alanine + ATP = UDP-N-acetyl-alpha-D-muramoyl-L-alanine + ADP + phosphate + H(+). It functions in the pathway cell wall biogenesis; peptidoglycan biosynthesis. In terms of biological role, cell wall formation. The sequence is that of UDP-N-acetylmuramate--L-alanine ligase from Dechloromonas aromatica (strain RCB).